We begin with the raw amino-acid sequence, 129 residues long: Small ribosomal subunit protein uS11 (129 aa).

In terms of assembly, part of the 30S ribosomal subunit. Interacts with proteins S7 and S18. Binds to IF-3. Post-translationally, may be methylated on an undetermined residue.

Located on the platform of the 30S subunit, it bridges several disparate RNA helices of the 16S rRNA. Forms part of the Shine-Dalgarno cleft in the 70S ribosome. The chain is Small ribosomal subunit protein uS11 from Rhodopseudomonas palustris (strain ATCC BAA-98 / CGA009).